Here is a 908-residue protein sequence, read N- to C-terminus: Alanine--tRNA ligase (908 aa).

H588, H592, C691, and H695 together coordinate Zn(2+).

Belongs to the class-II aminoacyl-tRNA synthetase family. Zn(2+) is required as a cofactor.

It is found in the cytoplasm. It carries out the reaction tRNA(Ala) + L-alanine + ATP = L-alanyl-tRNA(Ala) + AMP + diphosphate. Catalyzes the attachment of alanine to tRNA(Ala) in a two-step reaction: alanine is first activated by ATP to form Ala-AMP and then transferred to the acceptor end of tRNA(Ala). Also edits incorrectly charged Ser-tRNA(Ala) and Gly-tRNA(Ala) via its editing domain. This is Alanine--tRNA ligase from Mycobacterium leprae (strain TN).